The sequence spans 654 residues: MSTLLQHAQIDWDDQGRPHSRQYDDVYFAINEGIDETLHVFIEQNQLRQRFAELKPHDCLVIGETGFGTGMNFFCAWQLFAELAPAGARLHFVSVEKYPLSRDDLARAMQLWPELAAFTQPLLEQYVAIHPGFQQFSLDGGQVTLNLMIGDALEQLPQLDARIDAWFLDGFAPAKNPDMWTPELFTQLARLSRPGTTLGTFTTTGWVRRSLIEAGFTMKKVPGIGKKWEVMHGVYTGAAAAPAAPWYARPTDLPGPREALVIGAGLAGSATARSLAERGWQVSVLERHAGPAQEASGNPQGVLYLKLSAHGTTLSQMILSGFGYTRRWLEHLQRGQDWDACGVLQLAFDDQEAARQAKLAAAFDESLLQRLEHDQAEAVAGIALASGGLFYPEGGWVHPPALCQAQLGHPNVRLLNHHEVIELRKVDGQWQAWDGERLLASAPLVVLAGAADVRRFPACAELPLKRIRGQITRLPATEASRALRTVVCADGYVAPPRGDEHTLGASFDFHNDDLTPTTAEHQGNLGLLEDISTDLATRLGCAELDAEQLEGRAAFRCTSPDYLPIVGPVADVQAFNTTYAMLAKDARQVPDIACPWLDGLYVNSGHGSRGLITAPLSGELIAAWACGEPLPVPRAVAEACHPNRFALRRLIRGK.

Residues 1 to 236 (MSTLLQHAQI…KWEVMHGVYT (236 aa)) are tRNA (mnm(5)s(2)U34)-methyltransferase. Positions 262–654 (IGAGLAGSAT…FALRRLIRGK (393 aa)) are FAD-dependent cmnm(5)s(2)U34 oxidoreductase.

In the N-terminal section; belongs to the methyltransferase superfamily. tRNA (mnm(5)s(2)U34)-methyltransferase family. It in the C-terminal section; belongs to the DAO family. FAD serves as cofactor.

It is found in the cytoplasm. The catalysed reaction is 5-aminomethyl-2-thiouridine(34) in tRNA + S-adenosyl-L-methionine = 5-methylaminomethyl-2-thiouridine(34) in tRNA + S-adenosyl-L-homocysteine + H(+). Its function is as follows. Catalyzes the last two steps in the biosynthesis of 5-methylaminomethyl-2-thiouridine (mnm(5)s(2)U) at the wobble position (U34) in tRNA. Catalyzes the FAD-dependent demodification of cmnm(5)s(2)U34 to nm(5)s(2)U34, followed by the transfer of a methyl group from S-adenosyl-L-methionine to nm(5)s(2)U34, to form mnm(5)s(2)U34. The protein is tRNA 5-methylaminomethyl-2-thiouridine biosynthesis bifunctional protein MnmC of Pseudomonas entomophila (strain L48).